Here is a 520-residue protein sequence, read N- to C-terminus: Mu-like prophage FluMu protein gp29 (520 aa).

It to phage Mu protein gp29.

This chain is Mu-like prophage FluMu protein gp29, found in Haemophilus influenzae (strain ATCC 51907 / DSM 11121 / KW20 / Rd).